Here is a 274-residue protein sequence, read N- to C-terminus: tRNA pseudouridine synthase A (274 aa).

D54 functions as the Nucleophile in the catalytic mechanism. Y112 lines the substrate pocket.

This sequence belongs to the tRNA pseudouridine synthase TruA family. As to quaternary structure, homodimer.

It carries out the reaction uridine(38/39/40) in tRNA = pseudouridine(38/39/40) in tRNA. Functionally, formation of pseudouridine at positions 38, 39 and 40 in the anticodon stem and loop of transfer RNAs. This Solidesulfovibrio magneticus (strain ATCC 700980 / DSM 13731 / RS-1) (Desulfovibrio magneticus) protein is tRNA pseudouridine synthase A.